Reading from the N-terminus, the 464-residue chain is ATP synthase subunit beta (464 aa).

Position 153–160 (G153–T160) interacts with ATP.

It belongs to the ATPase alpha/beta chains family. F-type ATPases have 2 components, CF(1) - the catalytic core - and CF(0) - the membrane proton channel. CF(1) has five subunits: alpha(3), beta(3), gamma(1), delta(1), epsilon(1). CF(0) has three main subunits: a(1), b(2) and c(9-12). The alpha and beta chains form an alternating ring which encloses part of the gamma chain. CF(1) is attached to CF(0) by a central stalk formed by the gamma and epsilon chains, while a peripheral stalk is formed by the delta and b chains.

It localises to the cell membrane. The enzyme catalyses ATP + H2O + 4 H(+)(in) = ADP + phosphate + 5 H(+)(out). Produces ATP from ADP in the presence of a proton gradient across the membrane. The catalytic sites are hosted primarily by the beta subunits. The sequence is that of ATP synthase subunit beta from Clostridium novyi (strain NT).